Reading from the N-terminus, the 294-residue chain is Cytidine deaminase (294 aa).

CMP/dCMP-type deaminase domains follow at residues 48–168 and 186–294; these read DDDA…FGPR and LKGD…VTLA. 89-91 contacts substrate; sequence NME. H102 contributes to the Zn(2+) binding site. Catalysis depends on E104, which acts as the Proton donor. Zn(2+) contacts are provided by C129 and C132.

It belongs to the cytidine and deoxycytidylate deaminase family. In terms of assembly, homodimer. Requires Zn(2+) as cofactor.

The enzyme catalyses cytidine + H2O + H(+) = uridine + NH4(+). The catalysed reaction is 2'-deoxycytidine + H2O + H(+) = 2'-deoxyuridine + NH4(+). In terms of biological role, this enzyme scavenges exogenous and endogenous cytidine and 2'-deoxycytidine for UMP synthesis. The chain is Cytidine deaminase from Cronobacter sakazakii (strain ATCC BAA-894) (Enterobacter sakazakii).